Consider the following 126-residue polypeptide: Large ribosomal subunit protein eL14 (126 aa).

The protein belongs to the eukaryotic ribosomal protein eL14 family.

This is Large ribosomal subunit protein eL14 (RPL14) from Tetrahymena thermophila (strain SB210).